A 464-amino-acid polypeptide reads, in one-letter code: Kynureninase 2 (464 aa).

Residues Leu135, Thr136, 163-166 (FPSD), Asp248, His251, and Tyr273 each bind pyridoxal 5'-phosphate. Position 274 is an N6-(pyridoxal phosphate)lysine (Lys274). Pyridoxal 5'-phosphate is bound by residues Trp313 and Asn341.

Belongs to the kynureninase family. As to quaternary structure, homodimer. It depends on pyridoxal 5'-phosphate as a cofactor.

It localises to the cytoplasm. It catalyses the reaction L-kynurenine + H2O = anthranilate + L-alanine + H(+). The enzyme catalyses 3-hydroxy-L-kynurenine + H2O = 3-hydroxyanthranilate + L-alanine + H(+). It functions in the pathway amino-acid degradation; L-kynurenine degradation; L-alanine and anthranilate from L-kynurenine: step 1/1. It participates in cofactor biosynthesis; NAD(+) biosynthesis; quinolinate from L-kynurenine: step 2/3. Functionally, catalyzes the cleavage of L-kynurenine (L-Kyn) and L-3-hydroxykynurenine (L-3OHKyn) into anthranilic acid (AA) and 3-hydroxyanthranilic acid (3-OHAA), respectively. This Aspergillus clavatus (strain ATCC 1007 / CBS 513.65 / DSM 816 / NCTC 3887 / NRRL 1 / QM 1276 / 107) protein is Kynureninase 2 (bna5-2).